Reading from the N-terminus, the 217-residue chain is MTIKVHGNPRSTATQRVLVALYEKHLEFEFVPIDMGAGGHKQPSYLALNPFGQVPALEDGEIKLFESRAITKYLAYTHDHQNEGTSLIHKEKHEMAAQLVWEEVEAHQFDPVASKLAWELVFKGIFGMQTDTTVVEENEAKLAKVLDVYEARLTESEYLGANDSFTLVDLHHLPLLGYLMGTQVKKLFEERAHVSAWCKKILARPSWEKTLALQKQA.

Residues 2–82 (TIKVHGNPRS…YLAYTHDHQN (81 aa)) enclose the GST N-terminal domain. Residues Ser11, 40–41 (HK), 53–54 (QV), and 66–67 (ES) each bind glutathione. Positions 91-217 (EKHEMAAQLV…EKTLALQKQA (127 aa)) constitute a GST C-terminal domain.

The protein belongs to the GST superfamily. Phi family.

It localises to the cytoplasm. It catalyses the reaction RX + glutathione = an S-substituted glutathione + a halide anion + H(+). Conjugation of reduced glutathione to a wide number of exogenous and endogenous hydrophobic electrophiles. The chain is Glutathione S-transferase (GST) from Silene vulgaris (Bladder campion).